Here is a 400-residue protein sequence, read N- to C-terminus: Dual-specificity RNA methyltransferase RlmN (400 aa).

Glu125 functions as the Proton acceptor in the catalytic mechanism. The region spanning 131–372 (ETDRGTLCVS…VRTPRGRDIL (242 aa)) is the Radical SAM core domain. A disulfide bridge links Cys138 with Cys375. Cys145, Cys149, and Cys152 together coordinate [4Fe-4S] cluster. S-adenosyl-L-methionine contacts are provided by residues 201–202 (GE), Ser233, 255–257 (SLH), and Asn332. Cys375 acts as the S-methylcysteine intermediate in catalysis.

This sequence belongs to the radical SAM superfamily. RlmN family. The cofactor is [4Fe-4S] cluster.

Its subcellular location is the cytoplasm. The catalysed reaction is adenosine(2503) in 23S rRNA + 2 reduced [2Fe-2S]-[ferredoxin] + 2 S-adenosyl-L-methionine = 2-methyladenosine(2503) in 23S rRNA + 5'-deoxyadenosine + L-methionine + 2 oxidized [2Fe-2S]-[ferredoxin] + S-adenosyl-L-homocysteine. The enzyme catalyses adenosine(37) in tRNA + 2 reduced [2Fe-2S]-[ferredoxin] + 2 S-adenosyl-L-methionine = 2-methyladenosine(37) in tRNA + 5'-deoxyadenosine + L-methionine + 2 oxidized [2Fe-2S]-[ferredoxin] + S-adenosyl-L-homocysteine. Its function is as follows. Specifically methylates position 2 of adenine 2503 in 23S rRNA and position 2 of adenine 37 in tRNAs. m2A2503 modification seems to play a crucial role in the proofreading step occurring at the peptidyl transferase center and thus would serve to optimize ribosomal fidelity. This chain is Dual-specificity RNA methyltransferase RlmN, found in Bradyrhizobium diazoefficiens (strain JCM 10833 / BCRC 13528 / IAM 13628 / NBRC 14792 / USDA 110).